Reading from the N-terminus, the 362-residue chain is Phosphoserine aminotransferase (362 aa).

L-glutamate-binding residues include Ser9 and Arg42. Residues 76 to 77 (GR), Trp102, Thr153, Asp174, and Gln197 each bind pyridoxal 5'-phosphate. Lys198 is modified (N6-(pyridoxal phosphate)lysine). Residue 239–240 (NT) coordinates pyridoxal 5'-phosphate.

This sequence belongs to the class-V pyridoxal-phosphate-dependent aminotransferase family. SerC subfamily. In terms of assembly, homodimer. It depends on pyridoxal 5'-phosphate as a cofactor.

It is found in the cytoplasm. It carries out the reaction O-phospho-L-serine + 2-oxoglutarate = 3-phosphooxypyruvate + L-glutamate. It catalyses the reaction 4-(phosphooxy)-L-threonine + 2-oxoglutarate = (R)-3-hydroxy-2-oxo-4-phosphooxybutanoate + L-glutamate. The protein operates within amino-acid biosynthesis; L-serine biosynthesis; L-serine from 3-phospho-D-glycerate: step 2/3. Its pathway is cofactor biosynthesis; pyridoxine 5'-phosphate biosynthesis; pyridoxine 5'-phosphate from D-erythrose 4-phosphate: step 3/5. Functionally, catalyzes the reversible conversion of 3-phosphohydroxypyruvate to phosphoserine and of 3-hydroxy-2-oxo-4-phosphonooxybutanoate to phosphohydroxythreonine. This is Phosphoserine aminotransferase from Escherichia coli O17:K52:H18 (strain UMN026 / ExPEC).